Here is a 272-residue protein sequence, read N- to C-terminus: 3-deoxy-manno-octulosonate cytidylyltransferase (272 aa).

Belongs to the KdsB family.

The protein localises to the cytoplasm. It catalyses the reaction 3-deoxy-alpha-D-manno-oct-2-ulosonate + CTP = CMP-3-deoxy-beta-D-manno-octulosonate + diphosphate. It participates in nucleotide-sugar biosynthesis; CMP-3-deoxy-D-manno-octulosonate biosynthesis; CMP-3-deoxy-D-manno-octulosonate from 3-deoxy-D-manno-octulosonate and CTP: step 1/1. Its pathway is bacterial outer membrane biogenesis; lipopolysaccharide biosynthesis. Activates KDO (a required 8-carbon sugar) for incorporation into bacterial lipopolysaccharide in Gram-negative bacteria. This chain is 3-deoxy-manno-octulosonate cytidylyltransferase, found in Verminephrobacter eiseniae (strain EF01-2).